Consider the following 269-residue polypeptide: Shikimate dehydrogenase (NADP(+)) (269 aa).

Residues 14 to 16 (SKS) and Thr61 each bind shikimate. Lys65 (proton acceptor) is an active-site residue. Glu77 provides a ligand contact to NADP(+). The shikimate site is built by Asn86 and Asp102. Residues 126 to 130 (GAGGA), 150 to 155 (NRTYEK), and Met213 contribute to the NADP(+) site. Tyr215 is a shikimate binding site. Residue Gly237 coordinates NADP(+).

It belongs to the shikimate dehydrogenase family. Homodimer.

It carries out the reaction shikimate + NADP(+) = 3-dehydroshikimate + NADPH + H(+). Its pathway is metabolic intermediate biosynthesis; chorismate biosynthesis; chorismate from D-erythrose 4-phosphate and phosphoenolpyruvate: step 4/7. Functionally, involved in the biosynthesis of the chorismate, which leads to the biosynthesis of aromatic amino acids. Catalyzes the reversible NADPH linked reduction of 3-dehydroshikimate (DHSA) to yield shikimate (SA). This chain is Shikimate dehydrogenase (NADP(+)), found in Aliivibrio fischeri (strain ATCC 700601 / ES114) (Vibrio fischeri).